The chain runs to 248 residues: Pyridoxine 5'-phosphate synthase (248 aa).

N12 contributes to the 3-amino-2-oxopropyl phosphate binding site. Residue 14 to 15 participates in 1-deoxy-D-xylulose 5-phosphate binding; sequence DH. R23 contacts 3-amino-2-oxopropyl phosphate. H48 (proton acceptor) is an active-site residue. 1-deoxy-D-xylulose 5-phosphate contacts are provided by R50 and H55. E75 (proton acceptor) is an active-site residue. Residue T105 coordinates 1-deoxy-D-xylulose 5-phosphate. The active-site Proton donor is H196. 3-amino-2-oxopropyl phosphate contacts are provided by residues G197 and 218–219; that span reads GH.

It belongs to the PNP synthase family. Homooctamer; tetramer of dimers.

The protein localises to the cytoplasm. The enzyme catalyses 3-amino-2-oxopropyl phosphate + 1-deoxy-D-xylulose 5-phosphate = pyridoxine 5'-phosphate + phosphate + 2 H2O + H(+). It participates in cofactor biosynthesis; pyridoxine 5'-phosphate biosynthesis; pyridoxine 5'-phosphate from D-erythrose 4-phosphate: step 5/5. Its function is as follows. Catalyzes the complicated ring closure reaction between the two acyclic compounds 1-deoxy-D-xylulose-5-phosphate (DXP) and 3-amino-2-oxopropyl phosphate (1-amino-acetone-3-phosphate or AAP) to form pyridoxine 5'-phosphate (PNP) and inorganic phosphate. The polypeptide is Pyridoxine 5'-phosphate synthase (Pseudomonas paraeruginosa (strain DSM 24068 / PA7) (Pseudomonas aeruginosa (strain PA7))).